The sequence spans 313 residues: Ribosomal RNA small subunit methyltransferase H (313 aa).

S-adenosyl-L-methionine contacts are provided by residues 35–37, Asp55, Phe81, Asp103, and Gln110; that span reads GGH.

This sequence belongs to the methyltransferase superfamily. RsmH family.

It is found in the cytoplasm. It carries out the reaction cytidine(1402) in 16S rRNA + S-adenosyl-L-methionine = N(4)-methylcytidine(1402) in 16S rRNA + S-adenosyl-L-homocysteine + H(+). Functionally, specifically methylates the N4 position of cytidine in position 1402 (C1402) of 16S rRNA. The polypeptide is Ribosomal RNA small subunit methyltransferase H (Pseudomonas syringae pv. tomato (strain ATCC BAA-871 / DC3000)).